Here is a 186-residue protein sequence, read N- to C-terminus: NADH-quinone oxidoreductase subunit B (186 aa).

[4Fe-4S] cluster contacts are provided by cysteine 44, cysteine 45, cysteine 110, and cysteine 139.

The protein belongs to the complex I 20 kDa subunit family. As to quaternary structure, NDH-1 is composed of 14 different subunits. Subunits NuoB, C, D, E, F, and G constitute the peripheral sector of the complex. It depends on [4Fe-4S] cluster as a cofactor.

It localises to the cell inner membrane. It carries out the reaction a quinone + NADH + 5 H(+)(in) = a quinol + NAD(+) + 4 H(+)(out). NDH-1 shuttles electrons from NADH, via FMN and iron-sulfur (Fe-S) centers, to quinones in the respiratory chain. The immediate electron acceptor for the enzyme in this species is believed to be ubiquinone. Couples the redox reaction to proton translocation (for every two electrons transferred, four hydrogen ions are translocated across the cytoplasmic membrane), and thus conserves the redox energy in a proton gradient. This is NADH-quinone oxidoreductase subunit B from Leptospira interrogans serogroup Icterohaemorrhagiae serovar copenhageni (strain Fiocruz L1-130).